A 300-amino-acid chain; its full sequence is MHSLEKVTFEDVAIDFTQEEWDMMDTSKRKLYRDVMLENISHLVSLGYQISKSYIILQLEQGKELWWEGRVFLQDQNPDRESALKKKHMISMHPIIRKDTSTSMTMENSLILEDPFEYNDSGEDCTHSSTITQCLLTHSGKKPCVSKQCGKSLRNLLSPKPRKQIHTKGKSYQCNLCEKAYTNCFYLRRHKMTHTGERPYACHLCGKAFTQCSHLRRHEKTHTGERPYKCHQCGKAFIQSFNLRRHERTHLGQKCYECDKSGKAFSQSSGFRGNKIIHIGEKPPACLLCGKAFSLSSDLR.

Residues 7-78 form the KRAB domain; the sequence is VTFEDVAIDF…GRVFLQDQNP (72 aa). 3 consecutive C2H2-type zinc fingers follow at residues 172 to 194, 200 to 222, and 228 to 250; these read YQCN…KMTH, YACH…EKTH, and YKCH…ERTH. Residues 256–278 form a C2H2-type 4; degenerate zinc finger; the sequence is YECDKSGKAFSQSSGFRGNKIIH.

Belongs to the krueppel C2H2-type zinc-finger protein family.

It localises to the nucleus. May be involved in transcriptional regulation. This chain is Zinc finger protein 705B (ZNF705B), found in Homo sapiens (Human).